The chain runs to 101 residues: Chaperone modulatory protein CbpM (101 aa).

Belongs to the CbpM family.

Functionally, interacts with CbpA and inhibits both the DnaJ-like co-chaperone activity and the DNA binding activity of CbpA. Together with CbpA, modulates the activity of the DnaK chaperone system. Does not inhibit the co-chaperone activity of DnaJ. The sequence is that of Chaperone modulatory protein CbpM from Salmonella arizonae (strain ATCC BAA-731 / CDC346-86 / RSK2980).